The sequence spans 286 residues: Beta-lactamase SHV-46 (286 aa).

Positions 1-21 are cleaved as a signal peptide; it reads MRYIRLCIISLLATLPLAVHA. Residue serine 66 is the Acyl-ester intermediate of the active site. Cysteine 73 and cysteine 119 form a disulfide bridge. Residue glutamate 164 is the Proton acceptor of the active site. 230–232 contributes to the substrate binding site; it reads KTG.

Belongs to the class-A beta-lactamase family.

The enzyme catalyses a beta-lactam + H2O = a substituted beta-amino acid. This chain is Beta-lactamase SHV-46 (bla), found in Klebsiella oxytoca.